A 430-amino-acid polypeptide reads, in one-letter code: Histidine--tRNA ligase (430 aa).

Belongs to the class-II aminoacyl-tRNA synthetase family. In terms of assembly, homodimer.

The protein localises to the cytoplasm. The enzyme catalyses tRNA(His) + L-histidine + ATP = L-histidyl-tRNA(His) + AMP + diphosphate + H(+). This chain is Histidine--tRNA ligase, found in Chlamydia felis (strain Fe/C-56) (Chlamydophila felis).